We begin with the raw amino-acid sequence, 200 residues long: LexA repressor (200 aa).

The segment at residues 28–48 (RAEIARILGFKSANAAEEHIK) is a DNA-binding region (H-T-H motif). Active-site for autocatalytic cleavage activity residues include serine 118 and lysine 155.

It belongs to the peptidase S24 family. Homodimer.

It catalyses the reaction Hydrolysis of Ala-|-Gly bond in repressor LexA.. Represses a number of genes involved in the response to DNA damage (SOS response), including recA and lexA. In the presence of single-stranded DNA, RecA interacts with LexA causing an autocatalytic cleavage which disrupts the DNA-binding part of LexA, leading to derepression of the SOS regulon and eventually DNA repair. This chain is LexA repressor, found in Cellvibrio japonicus (strain Ueda107) (Pseudomonas fluorescens subsp. cellulosa).